A 338-amino-acid chain; its full sequence is Glycerol-3-phosphate dehydrogenase [NAD(P)+] (338 aa).

Positions 13, 14, and 108 each coordinate NADPH. 3 residues coordinate sn-glycerol 3-phosphate: Lys108, Gly139, and Ser141. Residue Ala143 participates in NADPH binding. Residues Lys194, Asp247, Ser257, Arg258, and Asn259 each contribute to the sn-glycerol 3-phosphate site. Lys194 (proton acceptor) is an active-site residue. Arg258 provides a ligand contact to NADPH. NADPH-binding residues include Val282 and Glu284.

The protein belongs to the NAD-dependent glycerol-3-phosphate dehydrogenase family.

Its subcellular location is the cytoplasm. It carries out the reaction sn-glycerol 3-phosphate + NAD(+) = dihydroxyacetone phosphate + NADH + H(+). The enzyme catalyses sn-glycerol 3-phosphate + NADP(+) = dihydroxyacetone phosphate + NADPH + H(+). Its pathway is membrane lipid metabolism; glycerophospholipid metabolism. Its function is as follows. Catalyzes the reduction of the glycolytic intermediate dihydroxyacetone phosphate (DHAP) to sn-glycerol 3-phosphate (G3P), the key precursor for phospholipid synthesis. In Streptococcus suis (strain 98HAH33), this protein is Glycerol-3-phosphate dehydrogenase [NAD(P)+].